The primary structure comprises 417 residues: MLKKDMNIADYDPELFNAIQNETLRQEEHIELIASENYTSPRVMQAQGSQLTNKYAEGYPGKRYYGGCEYVDVVETLAIERAKQLFGATYANVQPHSGSQANSAVYMALLKPGDTVLGMNLAHGGHLTHGSPVNFSGRLYNIIPYGIDESGKIDYDEMERLAVEHKPKMMIGGFSAYSGIVDWARMREIADKIGAYLFVDMAHVAGLIAAGVYPNPVPHAHVVTSTTHKTLAGPRGGIILSAADDEELYKKLNSAVFPGGQGGPLMHVIAGKAVAFKEALEPEFKAYQQQVVKNAKAMVEVFLERGYKIVSGGTDNHLMLVDLIGRDLTGKEADAALGSANITVNKNSVPNDPRSPFVTSGVRIGTPAITRRGFKEAEAKELTGWICDILDDAHNPAVIERVKGQVLALCARFPVYG.

(6S)-5,6,7,8-tetrahydrofolate-binding positions include Leu-121 and 125-127; that span reads GHL. The residue at position 229 (Lys-229) is an N6-(pyridoxal phosphate)lysine. A (6S)-5,6,7,8-tetrahydrofolate-binding site is contributed by 355–357; the sequence is SPF.

The protein belongs to the SHMT family. As to quaternary structure, homodimer. The cofactor is pyridoxal 5'-phosphate.

Its subcellular location is the cytoplasm. It carries out the reaction (6R)-5,10-methylene-5,6,7,8-tetrahydrofolate + glycine + H2O = (6S)-5,6,7,8-tetrahydrofolate + L-serine. It participates in one-carbon metabolism; tetrahydrofolate interconversion. Its pathway is amino-acid biosynthesis; glycine biosynthesis; glycine from L-serine: step 1/1. In terms of biological role, catalyzes the reversible interconversion of serine and glycine with tetrahydrofolate (THF) serving as the one-carbon carrier. This reaction serves as the major source of one-carbon groups required for the biosynthesis of purines, thymidylate, methionine, and other important biomolecules. Also exhibits THF-independent aldolase activity toward beta-hydroxyamino acids, producing glycine and aldehydes, via a retro-aldol mechanism. This is Serine hydroxymethyltransferase from Shewanella sp. (strain ANA-3).